We begin with the raw amino-acid sequence, 102 residues long: ATP-dependent Clp protease adapter protein ClpS (102 aa).

Belongs to the ClpS family. As to quaternary structure, binds to the N-terminal domain of the chaperone ClpA.

In terms of biological role, involved in the modulation of the specificity of the ClpAP-mediated ATP-dependent protein degradation. The polypeptide is ATP-dependent Clp protease adapter protein ClpS (Shewanella putrefaciens (strain CN-32 / ATCC BAA-453)).